Reading from the N-terminus, the 268-residue chain is Ribosomal RNA small subunit methyltransferase A (268 aa).

Residues Asn-12, Leu-14, Gly-38, Glu-59, Asp-82, and Asn-107 each coordinate S-adenosyl-L-methionine.

It belongs to the class I-like SAM-binding methyltransferase superfamily. rRNA adenine N(6)-methyltransferase family. RsmA subfamily.

The protein resides in the cytoplasm. It carries out the reaction adenosine(1518)/adenosine(1519) in 16S rRNA + 4 S-adenosyl-L-methionine = N(6)-dimethyladenosine(1518)/N(6)-dimethyladenosine(1519) in 16S rRNA + 4 S-adenosyl-L-homocysteine + 4 H(+). Functionally, specifically dimethylates two adjacent adenosines (A1518 and A1519) in the loop of a conserved hairpin near the 3'-end of 16S rRNA in the 30S particle. May play a critical role in biogenesis of 30S subunits. In Onion yellows phytoplasma (strain OY-M), this protein is Ribosomal RNA small subunit methyltransferase A.